Reading from the N-terminus, the 186-residue chain is uncharacterized protein (186 aa).

The region spanning 1 to 181 is the Macro domain; sequence MVSFSYKGNL…TFVSLASDFL (181 aa).

The protein belongs to the MacroD-type family.

This is an uncharacterized protein from Thermoplasma volcanium (strain ATCC 51530 / DSM 4299 / JCM 9571 / NBRC 15438 / GSS1).